A 123-amino-acid polypeptide reads, in one-letter code: Protein Wnt-7(I) (123 aa).

Ser1 is lipidated: O-palmitoleoyl serine; by PORCN. A disulfide bridge links Cys89 with Cys104. N-linked (GlcNAc...) asparagine glycosylation occurs at Asn90. Positions 121 to 123 (CKF) match the Microbody targeting signal motif.

It belongs to the Wnt family. Post-translationally, palmitoleoylation is required for efficient binding to frizzled receptors. Depalmitoleoylation leads to Wnt signaling pathway inhibition.

The protein resides in the secreted. It is found in the extracellular space. It localises to the extracellular matrix. In terms of biological role, ligand for members of the frizzled family of seven transmembrane receptors. Probable developmental protein. May be a signaling molecule which affects the development of discrete regions of tissues. Is likely to signal over only few cell diameters. The protein is Protein Wnt-7(I) (WNT-7(I)) of Eptatretus stoutii (Pacific hagfish).